Reading from the N-terminus, the 55-residue chain is Lantibiotic epilancin (55 aa).

Residues methionine 1–glutamine 24 constitute a propeptide, cleaved by ElxP. Residue serine 25 is modified to D-lactate; by the dehydratase ElxB and the dehydrogenase ElxO. Residue serine 27 is modified to 2,3-didehydroalanine (Ser); by the dehydratase ElxB. Threonine 31 carries the post-translational modification 2,3-didehydrobutyrine; by the dehydratase ElxB. Position 32 is a 2,3-didehydroalanine (Ser); by the dehydratase ElxB (serine 32). The segment at residues serine 36–cysteine 40 is a cross-link (lanthionine (Ser-Cys); by the dehydratase ElxB and the cyclase ElxC). 2 consecutive cross-links (beta-methyllanthionine (Thr-Cys); by the dehydratase ElxB and the cyclase ElxC) follow at residues threonine 44–cysteine 47 and threonine 46–cysteine 49. 2,3-didehydrobutyrine; by the dehydratase ElxB is present on threonine 52.

It belongs to the type A lantibiotic family. Post-translationally, maturation of this lantibiotic involves the enzymatic conversion of Thr, and Ser into dehydrated AA by ElxB and the formation of thioether bonds with cysteine by the cyclase ElxC. The next steps are cleavage of the leader peptide by ElxP and membrane translocation by ElxT. The leader peptide may be removed before membrane translocation, in contrast to other lantibiotics for which the cleavage occur after translocation. This is suggested by the probable cytoplasmic localization of the serine protease ElxP that cleaves the leader peptide. It is not established whether the 2,3-didehydrobutyrine is the E- or Z-isomer. In terms of processing, the N-terminal D-lactate is probably produced by dehydration of Ser-25 by ElxB, followed by proteolytic removal of the leader peptide by the serine protease ElxP and hydrolysis of the resulting new N-terminal dehydroalanine. This hydrolysis may occur spontaneously. The pyruvate group thus formed is reduced to D-lactate by the NADPH-dependent oxidoreductase ElxO. This N-terminal D-lactate protects the lantibiotic against degradation against aminopeptidase.

Lanthionine-containing peptide antibiotic (lantibiotic) active on Gram-positive bacteria such as staphylococci, enterococci and streptococci. The bactericidal activity of lantibiotics is based on depolarization of energized bacterial cytoplasmic membranes, initiated by the formation of aqueous transmembrane pores. This Staphylococcus epidermidis protein is Lantibiotic epilancin (elkA).